The primary structure comprises 505 residues: Sucrose porin (505 aa).

Positions 1–22 are cleaved as a signal peptide; the sequence is MYKKRKLAILIALLTGTAAAHG. The tract at residues 44–94 is disordered; sequence ETRASTAESRAASAEQKVQQLTQQQQQTQATTQQVARRTTQLEEKAERPGG. The span at 46 to 82 shows a compositional bias: low complexity; the sequence is RASTAESRAASAEQKVQQLTQQQQQTQATTQQVARRT. Over residues 83–93 the composition is skewed to basic and acidic residues; sequence TQLEEKAERPG.

Belongs to the porin LamB (TC 1.B.3) family. As to quaternary structure, homotrimer.

Its subcellular location is the cell outer membrane. Functionally, porin for sucrose uptake. In Klebsiella pneumoniae, this protein is Sucrose porin (scrY).